The chain runs to 254 residues: Type III pantothenate kinase (254 aa).

ATP is bound at residue 6 to 13 (DVGNTNTV). Residues Y100 and 107-110 (GADR) each bind substrate. The Proton acceptor role is filled by D109. Position 129 (D129) interacts with K(+). T132 contributes to the ATP binding site. T184 lines the substrate pocket.

This sequence belongs to the type III pantothenate kinase family. In terms of assembly, homodimer. The cofactor is NH4(+). Requires K(+) as cofactor.

It is found in the cytoplasm. The catalysed reaction is (R)-pantothenate + ATP = (R)-4'-phosphopantothenate + ADP + H(+). It participates in cofactor biosynthesis; coenzyme A biosynthesis; CoA from (R)-pantothenate: step 1/5. Functionally, catalyzes the phosphorylation of pantothenate (Pan), the first step in CoA biosynthesis. This is Type III pantothenate kinase from Syntrophus aciditrophicus (strain SB).